The following is a 106-amino-acid chain: Large ribosomal subunit protein uL24 (106 aa).

It belongs to the universal ribosomal protein uL24 family. Part of the 50S ribosomal subunit.

In terms of biological role, one of two assembly initiator proteins, it binds directly to the 5'-end of the 23S rRNA, where it nucleates assembly of the 50S subunit. One of the proteins that surrounds the polypeptide exit tunnel on the outside of the subunit. The protein is Large ribosomal subunit protein uL24 of Blochmanniella floridana.